A 509-amino-acid polypeptide reads, in one-letter code: Ribonuclease E/G-like protein (509 aa).

In terms of domain architecture, S1 motif spans 35-117 (SDIYLGCVDK…LTANITLSGR (83 aa)). Positions 296 and 339 each coordinate Mg(2+).

It belongs to the RNase E/G family. Mg(2+) is required as a cofactor.

Its subcellular location is the plastid. The protein localises to the chloroplast stroma. Its function is as follows. Involved in intercistronic processing of primary transcripts from chloroplast operons. The endonucleolytic activity of the enzyme depends on the number of phosphates at the 5' end, is inhibited by structured RNA, and preferentially cleaves A/U-rich sequences. This is Ribonuclease E/G-like protein (rne) from Pyropia yezoensis (Susabi-nori).